We begin with the raw amino-acid sequence, 408 residues long: Phosphoglycerate kinase (408 aa).

Substrate-binding positions include 28–30 (DIN), Arg-43, 66–69 (HQGR), Arg-123, and Arg-163. Residues Glu-334 and 358-361 (GGHT) each bind ATP.

It belongs to the phosphoglycerate kinase family. In terms of assembly, monomer.

It is found in the cytoplasm. The catalysed reaction is (2R)-3-phosphoglycerate + ATP = (2R)-3-phospho-glyceroyl phosphate + ADP. It participates in carbohydrate degradation; glycolysis; pyruvate from D-glyceraldehyde 3-phosphate: step 2/5. The sequence is that of Phosphoglycerate kinase from Pyrobaculum aerophilum (strain ATCC 51768 / DSM 7523 / JCM 9630 / CIP 104966 / NBRC 100827 / IM2).